Consider the following 360-residue polypeptide: Nucleoporin SEH1 (360 aa).

WD repeat units follow at residues 10–49, 55–96, 111–152, 160–210, 217–258, and 276–315; these read DHKD…DWHC, THSG…SNDK, DSRT…NLSQ, SCKL…RKYA, TVTD…KELT, and NHNS…NWKC. A Glycyl lysine isopeptide (Lys-Gly) (interchain with G-Cter in SUMO2) cross-link involves residue Lys12. Ser179 and Ser190 each carry phosphoserine. Over residues 324–354 the composition is skewed to polar residues; sequence SPVNGSSQQGTSNPSLGSTIPSLQNSLNGSS. Residues 324–360 form a disordered region; it reads SPVNGSSQQGTSNPSLGSTIPSLQNSLNGSSAGRKHS.

It belongs to the WD repeat SEC13 family. Component of the Nup107-160 subcomplex of the nuclear pore complex (NPC). The Nup107-160 subcomplex includes NUP160, NUP133, NUP107, NUP98, NUP85, NUP43, NUP37, SEH1 and SEC13. The SEH1 subunit appears to be only weakly associated with the Nup107-160 subcomplex. Component of the GATOR2 subcomplex, composed of MIOS, SEC13, SEH1L, WDR24 and WDR59. The GATOR2 complex interacts with CASTOR1 and CASTOR2; the interaction is negatively regulated by arginine. The GATOR2 complex interacts with SESN1, SESN2 and SESN3; the interaction is negatively regulated by amino acids. SESN1, SESN2 and SESN3 convey leucine availability via direct interaction with SEH1L and WDR24.

It is found in the chromosome. It localises to the centromere. The protein resides in the kinetochore. The protein localises to the nucleus. Its subcellular location is the nuclear pore complex. It is found in the lysosome membrane. The GATOR2 complex is negatively regulated by the upstream amino acid sensors CASTOR1 and SESN2, which sequester the GATOR2 complex in absence of amino acids. In the presence of abundant amino acids, GATOR2 is released from CASTOR1 and SESN2 and activated. Its function is as follows. Component of the Nup107-160 subcomplex of the nuclear pore complex (NPC). The Nup107-160 subcomplex is required for the assembly of a functional NPC. The Nup107-160 subcomplex is also required for normal kinetochore microtubule attachment, mitotic progression and chromosome segregation. This subunit plays a role in recruitment of the Nup107-160 subcomplex to the kinetochore. Functionally, as a component of the GATOR2 complex, functions as an activator of the amino acid-sensing branch of the mTORC1 signaling pathway. The GATOR2 complex indirectly activates mTORC1 through the inhibition of the GATOR1 subcomplex. GATOR2 probably acts as an E3 ubiquitin-protein ligase toward GATOR1. In the presence of abundant amino acids, the GATOR2 complex mediates ubiquitination of the NPRL2 core component of the GATOR1 complex, leading to GATOR1 inactivation. In the absence of amino acids, GATOR2 is inhibited, activating the GATOR1 complex. Within the GATOR2 complex, SEC13 and SEH1L are required to stabilize the complex. The polypeptide is Nucleoporin SEH1 (SEH1L) (Homo sapiens (Human)).